Reading from the N-terminus, the 295-residue chain is Tyrosine recombinase XerC (295 aa).

Residues 1-85 form the Core-binding (CB) domain; it reads MQNALQKYYD…ALRQFLAYLV (85 aa). The Tyr recombinase domain maps to 106–285; the sequence is YLPKNIDQEQ…DFKHLTDVYD (180 aa). Active-site residues include arginine 145, lysine 169, histidine 237, arginine 240, and histidine 263. The O-(3'-phospho-DNA)-tyrosine intermediate role is filled by tyrosine 272.

Belongs to the 'phage' integrase family. XerC subfamily. In terms of assembly, forms a cyclic heterotetrameric complex composed of two molecules of XerC and two molecules of XerD.

It localises to the cytoplasm. In terms of biological role, site-specific tyrosine recombinase, which acts by catalyzing the cutting and rejoining of the recombining DNA molecules. The XerC-XerD complex is essential to convert dimers of the bacterial chromosome into monomers to permit their segregation at cell division. It also contributes to the segregational stability of plasmids. This chain is Tyrosine recombinase XerC, found in Actinobacillus succinogenes (strain ATCC 55618 / DSM 22257 / CCUG 43843 / 130Z).